The sequence spans 551 residues: ATP synthase subunit alpha (551 aa).

174–181 (GDRQTGKT) contributes to the ATP binding site.

Belongs to the ATPase alpha/beta chains family. In terms of assembly, F-type ATPases have 2 components, CF(1) - the catalytic core - and CF(0) - the membrane proton channel. CF(1) has five subunits: alpha(3), beta(3), gamma(1), delta(1), epsilon(1). CF(0) has three main subunits: a(1), b(2) and c(9-12). The alpha and beta chains form an alternating ring which encloses part of the gamma chain. CF(1) is attached to CF(0) by a central stalk formed by the gamma and epsilon chains, while a peripheral stalk is formed by the delta and b chains.

Its subcellular location is the cell inner membrane. The enzyme catalyses ATP + H2O + 4 H(+)(in) = ADP + phosphate + 5 H(+)(out). Produces ATP from ADP in the presence of a proton gradient across the membrane. The alpha chain is a regulatory subunit. In Salinibacter ruber (strain DSM 13855 / M31), this protein is ATP synthase subunit alpha.